A 242-amino-acid polypeptide reads, in one-letter code: Sec-independent protein translocase protein TatCd (242 aa).

The next 3 helical transmembrane spans lie at isoleucine 19–aspartate 39, isoleucine 60–alanine 80, and leucine 107–leucine 127. Residues serine 128–arginine 149 are interaction with TatAd. The chain crosses the membrane as a helical span at residues phenylalanine 150–phenylalanine 170. An interaction with TatAd region spans residues leucine 171–lysine 187. Helical transmembrane passes span leucine 188 to aspartate 208 and phenylalanine 209 to valine 229.

It belongs to the TatC family. In terms of assembly, forms a complex with TatAd. Two types of complexes exist: one composed of TatAd and TatCd, and another composed only of TatAd.

It localises to the cell membrane. In terms of biological role, part of the twin-arginine translocation (Tat) system that transports large folded proteins containing a characteristic twin-arginine motif in their signal peptide across membranes. Required for PhoD secretion. TatCd promotes membrane localization of TatAd via domain specific interactions. TatCd is required for stabile production of TatAd as well as for its maintenance. The chain is Sec-independent protein translocase protein TatCd from Bacillus subtilis (strain 168).